The primary structure comprises 284 residues: 16S rRNA (guanine(1405)-N(7))-methyltransferase (284 aa).

S-adenosyl-L-methionine-binding positions include Tyr73, 111-113, Arg117, Ala142, Asp165, 191-192, Leu208, and Gln217; these read HAS and DL.

Belongs to the methyltransferase superfamily. Aminoglycoside resistance family.

The enzyme catalyses guanosine(1405) in 16S rRNA + S-adenosyl-L-methionine = N(7)-methylguanosine(1405) in 16S rRNA + S-adenosyl-L-homocysteine. In terms of biological role, specifically methylates the N(7) position of guanine 1405 in 16S rRNA. Confers resistance to various aminoglycosides, including gentamicin and kanamycin. In Frankia casuarinae (strain DSM 45818 / CECT 9043 / HFP020203 / CcI3), this protein is 16S rRNA (guanine(1405)-N(7))-methyltransferase (Krm).